A 191-amino-acid polypeptide reads, in one-letter code: Protein Ves (191 aa).

It belongs to the Ves family.

The chain is Protein Ves from Escherichia coli (strain ATCC 8739 / DSM 1576 / NBRC 3972 / NCIMB 8545 / WDCM 00012 / Crooks).